The chain runs to 179 residues: MSRIGKTPVLIPEKVTVDLDGLIVTVKGPKGELKRLMPEGVSFDKKDNTVVVSPTTNKIHSRQRHGLCRALIANMVEGVTQGFSKKLEIVGVGSRAQVKGKNLVVSAGYSHPVEMIPPDGITYKVESNTNVTVSGIDKEIVGNEAAKIRSIRPPEPYKGKGIKYHDERILRKAGKSGKK.

It belongs to the universal ribosomal protein uL6 family. As to quaternary structure, part of the 50S ribosomal subunit.

Its function is as follows. This protein binds to the 23S rRNA, and is important in its secondary structure. It is located near the subunit interface in the base of the L7/L12 stalk, and near the tRNA binding site of the peptidyltransferase center. The chain is Large ribosomal subunit protein uL6 from Prochlorococcus marinus (strain MIT 9312).